Reading from the N-terminus, the 325-residue chain is Tetraacyldisaccharide 4'-kinase (325 aa).

Residue 53–60 (SVGGNGKT) participates in ATP binding.

The protein belongs to the LpxK family.

It catalyses the reaction a lipid A disaccharide + ATP = a lipid IVA + ADP + H(+). It functions in the pathway glycolipid biosynthesis; lipid IV(A) biosynthesis; lipid IV(A) from (3R)-3-hydroxytetradecanoyl-[acyl-carrier-protein] and UDP-N-acetyl-alpha-D-glucosamine: step 6/6. In terms of biological role, transfers the gamma-phosphate of ATP to the 4'-position of a tetraacyldisaccharide 1-phosphate intermediate (termed DS-1-P) to form tetraacyldisaccharide 1,4'-bis-phosphate (lipid IVA). The sequence is that of Tetraacyldisaccharide 4'-kinase from Actinobacillus succinogenes (strain ATCC 55618 / DSM 22257 / CCUG 43843 / 130Z).